The primary structure comprises 425 residues: Histone-binding protein RBBP7 (425 aa).

The residue at position 2 (Ala2) is an N-acetylalanine. A Phosphoserine modification is found at Ser3. Position 4 is an N6-acetyllysine; alternate (Lys4). Lys4 participates in a covalent cross-link: Glycyl lysine isopeptide (Lys-Gly) (interchain with G-Cter in SUMO2); alternate. Residue Lys4 forms a Glycyl lysine isopeptide (Lys-Gly) (interchain with G-Cter in ubiquitin); alternate linkage. Thr10 bears the Phosphothreonine mark. 2 positions are modified to phosphoserine: Glu13 and Ser95. WD repeat units lie at residues 47 to 122 (QWLP…KINH), 128 to 173 (RARY…LRLR), 181 to 217 (GLSW…KIVD), 228 to 269 (VVED…HLVD), 275 to 312 (VNCL…LHTF), 318 to 369 (EIFQ…LFIH), and 376 to 403 (ISDF…IWQM). Lys101 participates in a covalent cross-link: Glycyl lysine isopeptide (Lys-Gly) (interchain with G-Cter in SUMO2). Lys119 is modified (N6-acetyllysine). Residue Lys155 forms a Glycyl lysine isopeptide (Lys-Gly) (interchain with G-Cter in SUMO2) linkage. Lys159 carries the post-translational modification N6-acetyllysine; alternate. Residue Lys159 forms a Glycyl lysine isopeptide (Lys-Gly) (interchain with G-Cter in SUMO2); alternate linkage. Ser354 is modified (phosphoserine).

Belongs to the WD repeat RBAP46/RBAP48/MSI1 family. As to quaternary structure, binds directly to helix 1 of the histone fold of histone H4, a region that is not accessible when H4 is in chromatin. Subunit of the type B histone acetyltransferase (HAT) complex, composed of RBBP7 and HAT1. Subunit of the core histone deacetylase (HDAC) complex, which is composed of HDAC1, HDAC2, RBBP4 and RBBP7. The core HDAC complex associates with SIN3A, ARID4B/SAP180, SAP18, SAP30, SAP130, SUDS3/SAP45 and possibly ARID4A/RBP1 and ING1 to form the SIN3 HDAC complex. Component of the nucleosome remodeling and deacetylase (NuRD) repressor complex, composed of core proteins MTA1, MTA2, MTA3, RBBP4, RBBP7, HDAC1, HDAC2, MBD2, MBD3, and peripherally associated proteins CDK2AP1, CDK2AP2, GATAD2A, GATAD2B, CHD3, CHD4 and CHD5. The exact stoichiometry of the NuRD complex is unknown, and some subunits such as MBD2 and MBD3, GATAD2A and GATAD2B, and CHD3, CHD4 and CHD5 define mutually exclusive NuRD complexes. The NuRD complex may interact with MBD3L1. The NuRD complex may interact with MBD3L2. Subunit of the PRC2/EED-EZH2 complex, which is composed of at least EED, EZH2, RBBP4, RBBP7 and SUZ12. The PRC2/EED-EZH2 complex may also associate with HDAC1. Component of the NURF-1 ISWI chromatin remodeling complex (also called the nucleosome-remodeling factor (NURF) complex) at least composed of SMARCA1 (isoform 2), BPTF, RBBP4 and RBBP7. Within the complex interacts with isoform 2 of SMARCA1. Component of the BPFT-SMARCA1 complex at least composed of SMARCA1 (isoform 1), BPFT, RBBP4 and RBBP7; the complex is catalytically inactive and does not remodel chromatin. Within the complex interacts with isoform 1 of SMARCA1. Interacts with BRCA1. Interacts with CDK2AP1. Interacts with CENPA. Interacts with CHD3. Interacts with CHD4. Interacts with CREBBP, and this interaction may be enhanced by the binding of phosphorylated CREB1 to CREBBP. Interacts with HDAC7. Interacts with MTA1. Interacts with PWWP2B. Interacts with RB1 (via viral protein-binding domain). Interacts with SUV39H1.

The protein resides in the nucleus. Functionally, core histone-binding subunit that may target chromatin remodeling factors, histone acetyltransferases and histone deacetylases to their histone substrates in a manner that is regulated by nucleosomal DNA. Component of several complexes which regulate chromatin metabolism. These include the type B histone acetyltransferase (HAT) complex, which is required for chromatin assembly following DNA replication; the core histone deacetylase (HDAC) complex, which promotes histone deacetylation and consequent transcriptional repression; the nucleosome remodeling and histone deacetylase complex (the NuRD complex), which promotes transcriptional repression by histone deacetylation and nucleosome remodeling; and the PRC2/EED-EZH2 complex, which promotes repression of homeotic genes during development; and the NURF (nucleosome remodeling factor) complex. This Homo sapiens (Human) protein is Histone-binding protein RBBP7 (RBBP7).